The primary structure comprises 176 residues: Peptide methionine sulfoxide reductase B3 (176 aa).

An N-terminal signal peptide occupies residues 1–26 (MNIVNSKILFLSFTLLLLLQSSIVES). The region spanning 51–172 (DEEWRAILSP…NSVSLKFTPA (122 aa)) is the MsrB domain. Residues C90, C93, C136, and C139 each contribute to the Zn(2+) site. A disulfide bridge connects residues C108 and C161. The active-site Nucleophile is the C161.

This sequence belongs to the MsrB Met sulfoxide reductase family. Requires Zn(2+) as cofactor.

Its subcellular location is the endoplasmic reticulum. It carries out the reaction L-methionyl-[protein] + [thioredoxin]-disulfide + H2O = L-methionyl-(R)-S-oxide-[protein] + [thioredoxin]-dithiol. In terms of biological role, catalyzes the reduction of methionine sulfoxide (MetSO) to methionine in proteins. Plays a protective role against oxidative stress by restoring activity to proteins that have been inactivated by methionine oxidation. Involved in cold tolerance. Eliminates MetSO and reactive oxygen species that accumulate at the ER during cold acclimation. MSRB family specifically reduces the MetSO R-enantiomer. This is Peptide methionine sulfoxide reductase B3 (MSRB3) from Arabidopsis thaliana (Mouse-ear cress).